Reading from the N-terminus, the 492-residue chain is GTPase Der (492 aa).

EngA-type G domains lie at 3–166 (PVVA…MDDV) and 205–378 (IKLA…DSST). Residues 9–16 (GRPNVGKS), 56–60 (DTGGI), 118–121 (NKTD), 211–218 (GRPNVGKS), 258–262 (DTAGV), and 323–326 (NKWD) each bind GTP. In terms of domain architecture, KH-like spans 379–463 (RRVSTALLTR…PIRIQFKEGA (85 aa)).

Belongs to the TRAFAC class TrmE-Era-EngA-EngB-Septin-like GTPase superfamily. EngA (Der) GTPase family. Associates with the 50S ribosomal subunit.

In terms of biological role, GTPase that plays an essential role in the late steps of ribosome biogenesis. The polypeptide is GTPase Der (Cronobacter sakazakii (strain ATCC BAA-894) (Enterobacter sakazakii)).